The chain runs to 193 residues: ATP-dependent Clp protease proteolytic subunit (193 aa).

Ser-98 functions as the Nucleophile in the catalytic mechanism. His-123 is a catalytic residue.

Belongs to the peptidase S14 family. Fourteen ClpP subunits assemble into 2 heptameric rings which stack back to back to give a disk-like structure with a central cavity, resembling the structure of eukaryotic proteasomes.

The protein resides in the cytoplasm. It catalyses the reaction Hydrolysis of proteins to small peptides in the presence of ATP and magnesium. alpha-casein is the usual test substrate. In the absence of ATP, only oligopeptides shorter than five residues are hydrolyzed (such as succinyl-Leu-Tyr-|-NHMec, and Leu-Tyr-Leu-|-Tyr-Trp, in which cleavage of the -Tyr-|-Leu- and -Tyr-|-Trp bonds also occurs).. In terms of biological role, cleaves peptides in various proteins in a process that requires ATP hydrolysis. Has a chymotrypsin-like activity. Plays a major role in the degradation of misfolded proteins. The sequence is that of ATP-dependent Clp protease proteolytic subunit from Agathobacter rectalis (strain ATCC 33656 / DSM 3377 / JCM 17463 / KCTC 5835 / VPI 0990) (Eubacterium rectale).